We begin with the raw amino-acid sequence, 62 residues long: UPF0434 protein Tola_2233 (62 aa).

This sequence belongs to the UPF0434 family.

This is UPF0434 protein Tola_2233 from Tolumonas auensis (strain DSM 9187 / NBRC 110442 / TA 4).